The chain runs to 258 residues: MNSIDPRAIIDPSAKLADGVEVGPWSIVGPDVEIGEGTVIGPHVVLKGPTRIGKHNRIYQFSSIGEDTPDLKYKGEPTRLVIGDHNVIREGVTIHRGTVQDRAETTLGDHNLIMAYAHIGHDSVIGNHCILVNNTALAGHVHVGDWAILSGFTLVHQYCHIGAHAFSGMGTAIGKDVPAFVTVFGSPAEARSMNFEGMRRRGFSDEVIHALRRSYKIVYRQGLTVEEAVKELDELAGKHPEVDLFRQSIVNSARGITR.

It belongs to the transferase hexapeptide repeat family. LpxA subfamily. As to quaternary structure, homotrimer.

It is found in the cytoplasm. It catalyses the reaction a (3R)-hydroxyacyl-[ACP] + UDP-N-acetyl-alpha-D-glucosamine = a UDP-3-O-[(3R)-3-hydroxyacyl]-N-acetyl-alpha-D-glucosamine + holo-[ACP]. It functions in the pathway glycolipid biosynthesis; lipid IV(A) biosynthesis; lipid IV(A) from (3R)-3-hydroxytetradecanoyl-[acyl-carrier-protein] and UDP-N-acetyl-alpha-D-glucosamine: step 1/6. Involved in the biosynthesis of lipid A, a phosphorylated glycolipid that anchors the lipopolysaccharide to the outer membrane of the cell. This chain is Acyl-[acyl-carrier-protein]--UDP-N-acetylglucosamine O-acyltransferase, found in Pseudomonas putida (strain W619).